A 250-amino-acid polypeptide reads, in one-letter code: MFKVLLEPDLQEALIFLNESVNALLTIYSECEILYSGRAKSRASLSPRLTIIKPDGSVIIHGPTKREPVNWQPPGSRIEYSIESGVLTVNAERKRPKERLSILHHRVYYITSSEVKPGEFFLVGREKDEVDFIINNPDVIEGGFKPIHREYRTPYGTVDLIGKDKEGNLVVLEFKRAKASLQAVSQLYRYIMYFKEIGENARGILVAPGISENALNLLKRLELEYVNISDKLGDSTISRPINYVPNLQRD.

The protein belongs to the NucS endonuclease family.

It localises to the cytoplasm. Functionally, cleaves both 3' and 5' ssDNA extremities of branched DNA structures. This Sulfolobus acidocaldarius (strain ATCC 33909 / DSM 639 / JCM 8929 / NBRC 15157 / NCIMB 11770) protein is Endonuclease NucS.